The chain runs to 953 residues: Protein translocase subunit SecA (953 aa).

ATP is bound by residues Gln-84, 102-106, and Asp-491; that span reads GEGKT. Residues 832–953 form a disordered region; that stretch reads EPEPAPEQPS…RAEAKKNKRR (122 aa). Over residues 841-865 the composition is skewed to low complexity; it reads SVPVSVSRSAEPTPDLQAAAEAAAA. The span at 898–907 shows a compositional bias: basic and acidic residues; it reads KGLDAPEKQR. Residues 908-934 are compositionally biased toward polar residues; sequence LNYSGPTEQGGVQTTSESAGEQGNGTS. A compositionally biased stretch (basic and acidic residues) spans 940–953; that stretch reads RAAARAEAKKNKRR.

Belongs to the SecA family. As to quaternary structure, monomer and homodimer. Part of the essential Sec protein translocation apparatus which comprises SecA, SecYEG and auxiliary proteins SecDF. Other proteins may also be involved.

It is found in the cell membrane. It localises to the cytoplasm. It catalyses the reaction ATP + H2O + cellular proteinSide 1 = ADP + phosphate + cellular proteinSide 2.. In terms of biological role, part of the Sec protein translocase complex. Interacts with the SecYEG preprotein conducting channel. Has a central role in coupling the hydrolysis of ATP to the transfer of proteins into and across the cell membrane, serving as an ATP-driven molecular motor driving the stepwise translocation of polypeptide chains across the membrane. This Saccharopolyspora erythraea (strain ATCC 11635 / DSM 40517 / JCM 4748 / NBRC 13426 / NCIMB 8594 / NRRL 2338) protein is Protein translocase subunit SecA.